The primary structure comprises 581 residues: Arginine--tRNA ligase (581 aa).

A 'HIGH' region motif is present at residues 126-136; that stretch reads PNLAKEMHVGH.

The protein belongs to the class-I aminoacyl-tRNA synthetase family. As to quaternary structure, monomer.

Its subcellular location is the cytoplasm. It carries out the reaction tRNA(Arg) + L-arginine + ATP = L-arginyl-tRNA(Arg) + AMP + diphosphate. This is Arginine--tRNA ligase from Shewanella putrefaciens (strain CN-32 / ATCC BAA-453).